Consider the following 371-residue polypeptide: Cytochrome b (371 aa).

Helical transmembrane passes span 25-45 (FGSM…FLAV), 69-90 (WLMQ…YIHI), 105-125 (WMSG…GYVL), and 170-190 (FFAL…LHII). Residues H75 and H89 each contribute to the heme b site. Heme b-binding residues include H174 and H188. H193 lines the a ubiquinone pocket. Helical transmembrane passes span 218–238 (YKDL…VSFF), 280–300 (LGGA…PLTH), 312–332 (LSQL…WAAT), and 339–358 (YIII…ISTP).

It belongs to the cytochrome b family. In terms of assembly, the cytochrome bc1 complex contains 3 respiratory subunits (MT-CYB, CYC1 and UQCRFS1), 2 core proteins (UQCRC1 and UQCRC2) and probably 6 low-molecular weight proteins. Heme b serves as cofactor.

It localises to the mitochondrion inner membrane. Component of the ubiquinol-cytochrome c reductase complex (complex III or cytochrome b-c1 complex) that is part of the mitochondrial respiratory chain. The b-c1 complex mediates electron transfer from ubiquinol to cytochrome c. Contributes to the generation of a proton gradient across the mitochondrial membrane that is then used for ATP synthesis. This Python regius (Ball python) protein is Cytochrome b (MT-CYB).